The primary structure comprises 419 residues: Putative BTB/POZ domain-containing protein L85 (419 aa).

The BTB domain occupies 16 to 89 (TDLTIVLKDD…FYDKTSTNSE (74 aa)). Residues 250–290 (SSSNDSDEDASETESEHNSETESEHNSETESEHNSETESKH) form a disordered region. Residues 263–290 (ESEHNSETESEHNSETESEHNSETESKH) show a composition bias toward basic and acidic residues.

The protein belongs to the mimivirus BTB/WD family.

In Acanthamoeba polyphaga (Amoeba), this protein is Putative BTB/POZ domain-containing protein L85.